We begin with the raw amino-acid sequence, 190 residues long: Putative manganese efflux pump MntP (190 aa).

6 consecutive transmembrane segments (helical) span residues 3 to 23 (PASI…AAVG), 39 to 59 (IGLI…FIGQ), 65 to 85 (VANW…LHMI), 106 to 128 (WLLA…GLAF), 133 to 155 (IWVA…VMLG), and 157 to 177 (AIGT…LIIV).

It belongs to the MntP (TC 9.B.29) family.

The protein localises to the cell inner membrane. Its function is as follows. Probably functions as a manganese efflux pump. In Pseudomonas fluorescens (strain ATCC BAA-477 / NRRL B-23932 / Pf-5), this protein is Putative manganese efflux pump MntP.